We begin with the raw amino-acid sequence, 680 residues long: DNA-directed RNA polymerase subunit beta' (680 aa).

Residues cysteine 69, cysteine 71, cysteine 87, and cysteine 90 each coordinate Zn(2+). Mg(2+) contacts are provided by aspartate 489, aspartate 491, and aspartate 493.

The protein belongs to the RNA polymerase beta' chain family. RpoC1 subfamily. In plastids the minimal PEP RNA polymerase catalytic core is composed of four subunits: alpha, beta, beta', and beta''. When a (nuclear-encoded) sigma factor is associated with the core the holoenzyme is formed, which can initiate transcription. Mg(2+) serves as cofactor. Zn(2+) is required as a cofactor.

The protein resides in the plastid. It is found in the chloroplast. The catalysed reaction is RNA(n) + a ribonucleoside 5'-triphosphate = RNA(n+1) + diphosphate. DNA-dependent RNA polymerase catalyzes the transcription of DNA into RNA using the four ribonucleoside triphosphates as substrates. The chain is DNA-directed RNA polymerase subunit beta' from Carica papaya (Papaya).